A 417-amino-acid polypeptide reads, in one-letter code: Lipoyl synthase, mitochondrial (417 aa).

Residues 1 to 30 (MATSIPRSRCFLTSSTLKVVPRSRTPLRSF) constitute a mitochondrion transit peptide. The interval 23-62 (SRTPLRSFATTSDTPQTSVPEAPGKRSRPPTSFSDTLNAG) is disordered. 2 stretches are compositionally biased toward polar residues: residues 30 to 41 (FATTSDTPQTSV) and 51 to 61 (PPTSFSDTLNA). [4Fe-4S] cluster-binding residues include C132, C137, C143, C163, C167, C170, and S378. One can recognise a Radical SAM core domain in the interval 146 to 367 (GSSKSAATAT…RQRALDMGFL (222 aa)).

It belongs to the radical SAM superfamily. Lipoyl synthase family. [4Fe-4S] cluster serves as cofactor.

The protein localises to the mitochondrion. It catalyses the reaction [[Fe-S] cluster scaffold protein carrying a second [4Fe-4S](2+) cluster] + N(6)-octanoyl-L-lysyl-[protein] + 2 oxidized [2Fe-2S]-[ferredoxin] + 2 S-adenosyl-L-methionine + 4 H(+) = [[Fe-S] cluster scaffold protein] + N(6)-[(R)-dihydrolipoyl]-L-lysyl-[protein] + 4 Fe(3+) + 2 hydrogen sulfide + 2 5'-deoxyadenosine + 2 L-methionine + 2 reduced [2Fe-2S]-[ferredoxin]. It participates in protein modification; protein lipoylation via endogenous pathway; protein N(6)-(lipoyl)lysine from octanoyl-[acyl-carrier-protein]: step 2/2. Its function is as follows. Catalyzes the radical-mediated insertion of two sulfur atoms into the C-6 and C-8 positions of the octanoyl moiety bound to the lipoyl domains of lipoate-dependent enzymes, thereby converting the octanoylated domains into lipoylated derivatives. This is Lipoyl synthase, mitochondrial from Pyrenophora tritici-repentis (strain Pt-1C-BFP) (Wheat tan spot fungus).